The following is a 194-amino-acid chain: Recombination protein RecR (194 aa).

Residues 53 to 68 (CEICFNLDVTSPCSIC) form a C4-type zinc finger. The Toprim domain maps to 76–171 (SLLCIVEELG…KVTRLACGIP (96 aa)).

The protein belongs to the RecR family.

Its function is as follows. May play a role in DNA repair. It seems to be involved in an RecBC-independent recombinational process of DNA repair. It may act with RecF and RecO. This chain is Recombination protein RecR, found in Anaplasma phagocytophilum (strain HZ).